We begin with the raw amino-acid sequence, 346 residues long: UDP-N-acetylenolpyruvoylglucosamine reductase (346 aa).

The FAD-binding PCMH-type domain occupies 23–194 (FDVRARLACR…VSVTFRLPKV (172 aa)). Arg-170 is an active-site residue. Ser-246 serves as the catalytic Proton donor. The active site involves Glu-342.

This sequence belongs to the MurB family. The cofactor is FAD.

The protein resides in the cytoplasm. The enzyme catalyses UDP-N-acetyl-alpha-D-muramate + NADP(+) = UDP-N-acetyl-3-O-(1-carboxyvinyl)-alpha-D-glucosamine + NADPH + H(+). It participates in cell wall biogenesis; peptidoglycan biosynthesis. Functionally, cell wall formation. In Paraburkholderia phymatum (strain DSM 17167 / CIP 108236 / LMG 21445 / STM815) (Burkholderia phymatum), this protein is UDP-N-acetylenolpyruvoylglucosamine reductase.